Here is a 414-residue protein sequence, read N- to C-terminus: MSQKIQGGSVVEMQGDEMTRIIWELIKEKLIFPYVELDLHSYDLGIENRDATNDQVTKDAAEAIKKYNVGVKCATITPDEKRVEEFKLKQMWKSPNGTIRNILGGTVFREAIICKNIPRLVSGWVKPIIIGRHAYGDQYRATDFVVPGPGKVEISYTPSDGSPKTVYLVHNFTESGGVAMGMYNQDKSIEDFAHSSFQMALSKNWPLYLSTKNTILKKYDGRFKDIFQEIYDKQYKSEFEAQNIWYEHRLIDDMVAQAMKSEGGFIWACKNYDGDVQSDSVAQGYGSLGMMTSVLVCPDGKTVEAEAAHGTVTRHYRMYQKGQETLTNPIASIFAWTRGLAHRAKLDNNKELSFFAKALEEVCIETIEAGFMTKDLAACIKGLPNVQRSDYLNTFEFMDKLGENLQLKLAQAKL.

The residue at position 2 (Ser-2) is an N-acetylserine. Residue Tyr-42 is modified to Phosphotyrosine. Position 75–77 (75–77 (TIT)) interacts with NADP(+). Residue Thr-77 participates in substrate binding. Lys-81 bears the N6-acetyllysine mark. Position 82 (Arg-82) interacts with NADP(+). Substrate is bound by residues 94-100 (SPNGTIR) and Arg-109. Lys-126 bears the N6-succinyllysine mark. Substrate is bound by residues Arg-132 and Lys-212. N6-acetyllysine is present on residues Lys-224 and Lys-233. Asp-252 contacts Mn(2+). Lys-260 serves as a coordination point for NADP(+). Mn(2+) contacts are provided by Asp-275 and Asp-279. Position 310–315 (310–315 (GTVTRH)) interacts with NADP(+). Lys-321 is subject to N6-acetyllysine. Asn-328 contributes to the NADP(+) binding site. Ser-389 is modified (phosphoserine). Position 400 is an N6-succinyllysine (Lys-400).

This sequence belongs to the isocitrate and isopropylmalate dehydrogenases family. Homodimer. It depends on Mg(2+) as a cofactor. Requires Mn(2+) as cofactor. Acetylation at Lys-374 dramatically reduces catalytic activity. Expressed preferentially in corneal epithelium. Constitute approximately 13% of the total soluble bovine corneal epithelial proteins.

The protein localises to the cytoplasm. The protein resides in the cytosol. It carries out the reaction D-threo-isocitrate + NADP(+) = 2-oxoglutarate + CO2 + NADPH. Catalyzes the NADP(+)-dependent oxidative decarboxylation of isocitrate (D-threo-isocitrate) to 2-ketoglutarate (2-oxoglutarate), which is required by other enzymes such as the phytanoyl-CoA dioxygenase. Plays a critical role in the generation of NADPH, an important cofactor in many biosynthesis pathways. May act as a corneal epithelial crystallin and may be involved in maintaining corneal epithelial transparency. This Bos taurus (Bovine) protein is Isocitrate dehydrogenase [NADP] cytoplasmic (IDH1).